The following is a 454-amino-acid chain: uncharacterized protein (454 aa).

Positions 73, 79, 82, and 154 each coordinate [4Fe-4S] cluster. The S-adenosyl-L-methionine site is built by Gln-279, Phe-307, Asp-328, and Asp-381. Residue Cys-408 is the Nucleophile of the active site.

This sequence belongs to the class I-like SAM-binding methyltransferase superfamily. RNA M5U methyltransferase family.

This is an uncharacterized protein from Leptospira interrogans serogroup Icterohaemorrhagiae serovar Lai (strain 56601).